Reading from the N-terminus, the 369-residue chain is tRNA 2-selenouridine synthase (369 aa).

Residues 12-136 (FLDDIPLMDV…LRNFLFETTR (125 aa)) form the Rhodanese domain. C95 serves as the catalytic S-selanylcysteine intermediate.

This sequence belongs to the SelU family. As to quaternary structure, monomer.

The catalysed reaction is 5-methylaminomethyl-2-thiouridine(34) in tRNA + selenophosphate + (2E)-geranyl diphosphate + H2O + H(+) = 5-methylaminomethyl-2-selenouridine(34) in tRNA + (2E)-thiogeraniol + phosphate + diphosphate. The enzyme catalyses 5-methylaminomethyl-2-thiouridine(34) in tRNA + (2E)-geranyl diphosphate = 5-methylaminomethyl-S-(2E)-geranyl-thiouridine(34) in tRNA + diphosphate. It carries out the reaction 5-methylaminomethyl-S-(2E)-geranyl-thiouridine(34) in tRNA + selenophosphate + H(+) = 5-methylaminomethyl-2-(Se-phospho)selenouridine(34) in tRNA + (2E)-thiogeraniol. It catalyses the reaction 5-methylaminomethyl-2-(Se-phospho)selenouridine(34) in tRNA + H2O = 5-methylaminomethyl-2-selenouridine(34) in tRNA + phosphate. Involved in the post-transcriptional modification of the uridine at the wobble position (U34) of tRNA(Lys), tRNA(Glu) and tRNA(Gln). Catalyzes the conversion of 2-thiouridine (S2U-RNA) to 2-selenouridine (Se2U-RNA). Acts in a two-step process involving geranylation of 2-thiouridine (S2U) to S-geranyl-2-thiouridine (geS2U) and subsequent selenation of the latter derivative to 2-selenouridine (Se2U) in the tRNA chain. In Pseudomonas aeruginosa (strain ATCC 15692 / DSM 22644 / CIP 104116 / JCM 14847 / LMG 12228 / 1C / PRS 101 / PAO1), this protein is tRNA 2-selenouridine synthase.